A 900-amino-acid chain; its full sequence is MENQESDEPMQKKPHLLDSVSPNSMARNSSPSHPIAKSVSFFDCDFSLLCLRLVDYEIDVDATVLQLQNQKLVQQLDLQKKQLYDVESKIQELQLNQTSYDDELISVNQLWNQLVDDLILLGVRAGANQEALNYLDIVDKKRVPPCAADETFLCRLLQVDSLDTSKSDEVVRKVEEALALRHSSTMELMGLFENTIDTQKTKAESISQSLHAVKSTEDATIQLSSINDLMKEESKNLREMIDALHVRHKEHSEQIQAYISSHSTDQSELKHLKGQLEEIKAELEENRRKLITLKMQKDAACEGHVTSPAIANGSLSPEKPVDKTKLRELKDSIDEIKIMAEGRLSELQASQEYNLSLSRQCQDIENELKDDQYIYSSRLYSLINDRIHHWNAELDRYKILTEAIQAERSFVMRRDKELNLRAESLEAANHKTTTVGSRIEVLEKKLQSCIIEKNGLELETEEAIQDSERQDIKSEFIAMASTLSKEMEMMEAQLKRWKDTAQDALYLREQAQSLRVSLSNKADEQKGLEDKCAKQMAEIKSLKALIEKLLKEKLQLQNLASICTRECNDDRGLAEIKDSQRKAQAQAEELKNVLDEHFLELRVKAAHETESACQERLATAKAEIAELRTQLDLSEREVLELKEGIKVKEQEAEASIAEMETIGQAYEDMQTQNQHLLQQVAERDDYNIKLVSESVKTKHAYNTHLSEKQVMEKQLHQVNASVENFKARIAHNEEQMKGCFSEAYKLIQEDRHLVISLETTKWEVADADKEFRWLKSAVSSSEKEYEQISRRTDDIKLELDDERREKKKLEEELMELNKELEELGSESVEAAIVRLQEEVKNCKNILKCGVCFDRPKEVVIVKCYHLFCQQCIQRSLEIRHRKCPGCGTAFGQNDVRLVKM.

The tract at residues 1–31 (MENQESDEPMQKKPHLLDSVSPNSMARNSSP) is disordered. The segment covering 20-31 (VSPNSMARNSSP) has biased composition (polar residues). Coiled-coil stretches lie at residues 63–96 (TVLQ…LQLN), 217–300 (EDAT…KDAA), 437–660 (SRIE…AEME), and 706–737 (SEKQ…EQMK). An RING-type zinc finger spans residues 848 to 887 (CGVCFDRPKEVVIVKCYHLFCQQCIQRSLEIRHRKCPGCG).

The protein belongs to the BRE1 family. As to quaternary structure, may act as a tetramer consisting of two copies of HUB1 and two copies of HUB2. In terms of tissue distribution, ubiquitously expressed.

The protein resides in the nucleus. The catalysed reaction is S-ubiquitinyl-[E2 ubiquitin-conjugating enzyme]-L-cysteine + [acceptor protein]-L-lysine = [E2 ubiquitin-conjugating enzyme]-L-cysteine + N(6)-ubiquitinyl-[acceptor protein]-L-lysine.. The protein operates within protein modification; protein ubiquitination. E3 ubiquitin-protein ligase that monoubiquitinates H2B to form H2BK143ub1. H2BK143ub1 gives a specific tag for epigenetic transcriptional activation and is also prerequisite for H3K4me and maybe H3K79me. It thereby plays a central role in histone code and gene regulation. Forms a ubiquitin ligase complex in cooperation with the E2 enzyme UBC2/RAD6. This is E3 ubiquitin-protein ligase BRE1-like 2 (HUB2) from Arabidopsis thaliana (Mouse-ear cress).